Reading from the N-terminus, the 323-residue chain is MADPGDRLGVLTTTRRVVEQAQAVWIDHDAVAQIAEAFAARQVTPPTWNRELHWSDGREALANYILVLDAVNFCFWGEPRWRIEYAGAVYDGYWALAASLKRALEQGVPLTDASYLAEITRDDVATIFAGEGEIPLLDERARILRETGSVLAERFAGRFSDAIAAAGRSAVALVDIVTNAFPSFRDVATYRGEQVRFYKRAQILVSDLYGAFDGSDLGAFDDLGELTAFADYKVPQVLHHLGILRYAPALHDRLARREEIPAGSPEEVEIRAATIWGVEELRRALASRGHALDAYQVDWLLWDEGQRLPAGTLPYHRTRTIFY.

Queuosine 5'-phosphate-binding residues include asparagine 72, tyrosine 93, lysine 199, phenylalanine 229, aspartate 231, aspartate 298, tryptophan 302, and glutamine 306. Aspartate 231 (nucleophile or transition state stabilizer) is an active-site residue.

The protein belongs to the QNG1 protein family. As to quaternary structure, monomer.

It catalyses the reaction queuosine 5'-phosphate + H2O = queuine + D-ribose 5-phosphate. Catalyzes the hydrolysis of queuosine 5'-phosphate, releasing the nucleobase queuine (q). Is likely required for salvage of queuine from exogenous queuosine (Q) that is imported and then converted to queuosine 5'-phosphate intracellularly. In vitro, can also catalyze the release of the q base directly from Q as substrate; however, Q may not be the biologically relevant substrate. Shows a very low activity on queuosine 3',5'-diphosphate, and cannot release q from queuosine 3'-phosphate and from the 5'-nucleotides AMP, UMP, CMP or GMP, indicating specificity for the queuine base. This Sphaerobacter thermophilus (strain ATCC 49802 / DSM 20745 / KCCM 41009 / NCIMB 13125 / S 6022) protein is Queuosine 5'-phosphate N-glycosylase/hydrolase.